A 396-amino-acid polypeptide reads, in one-letter code: Acetate kinase (396 aa).

Asn-7 contacts Mg(2+). Residue Lys-14 participates in ATP binding. Residue Arg-89 coordinates substrate. Asp-146 serves as the catalytic Proton donor/acceptor. Residues 206–210 (HLGNG), 280–282 (DLR), and 328–332 (GIGEN) each bind ATP. A Mg(2+)-binding site is contributed by Glu-382.

The protein belongs to the acetokinase family. In terms of assembly, homodimer. It depends on Mg(2+) as a cofactor. Requires Mn(2+) as cofactor.

The protein localises to the cytoplasm. The catalysed reaction is acetate + ATP = acetyl phosphate + ADP. It functions in the pathway metabolic intermediate biosynthesis; acetyl-CoA biosynthesis; acetyl-CoA from acetate: step 1/2. Its function is as follows. Catalyzes the formation of acetyl phosphate from acetate and ATP. Can also catalyze the reverse reaction. This chain is Acetate kinase, found in Maridesulfovibrio salexigens (strain ATCC 14822 / DSM 2638 / NCIMB 8403 / VKM B-1763) (Desulfovibrio salexigens).